We begin with the raw amino-acid sequence, 364 residues long: Chorismate synthase (364 aa).

The NADP(+) site is built by arginine 48 and arginine 54. FMN contacts are provided by residues 129–131, 243–244, glycine 288, 303–307, and arginine 329; these read RSS, NA, and KPTSS.

Belongs to the chorismate synthase family. Homotetramer. FMNH2 is required as a cofactor.

The enzyme catalyses 5-O-(1-carboxyvinyl)-3-phosphoshikimate = chorismate + phosphate. The protein operates within metabolic intermediate biosynthesis; chorismate biosynthesis; chorismate from D-erythrose 4-phosphate and phosphoenolpyruvate: step 7/7. Catalyzes the anti-1,4-elimination of the C-3 phosphate and the C-6 proR hydrogen from 5-enolpyruvylshikimate-3-phosphate (EPSP) to yield chorismate, which is the branch point compound that serves as the starting substrate for the three terminal pathways of aromatic amino acid biosynthesis. This reaction introduces a second double bond into the aromatic ring system. This Chelativorans sp. (strain BNC1) protein is Chorismate synthase.